The following is a 510-amino-acid chain: Facilitated glucose transporter protein 1 (510 aa).

Residues 1–29 are disordered; sequence MSEKSRSDTSATASLSDSSKSPSSYSTPG. The Cytoplasmic portion of the chain corresponds to 1-46; that stretch reads MSEKSRSDTSATASLSDSSKSPSSYSTPGTTTQKIIFPDGKLTKCL. The segment covering 8–29 has biased composition (low complexity); the sequence is DTSATASLSDSSKSPSSYSTPG. The helical transmembrane segment at 47–67 threads the bilayer; the sequence is AFSAFVITLASFQFGYHIGCV. Topologically, residues 68-100 are extracellular; the sequence is NAPGGLITEWIIGSHKDLFDKELSRENADLAWS. A helical transmembrane segment spans residues 101 to 121; that stretch reads VAVSVFAVGGMIGGLSSGWLA. Over 122–127 the chain is Cytoplasmic; sequence DKVGRR. A helical membrane pass occupies residues 128 to 146; sequence GALFYNNLLALAAAALMGL. Residues 147–160 lie on the Extracellular side of the membrane; that stretch reads AKSVGAYPMVILGR. The chain crosses the membrane as a helical span at residues 161–181; that stretch reads LIIGLNCGFSSALVPMFLTEI. The Cytoplasmic segment spans residues 182–195; the sequence is SPNNLRGMLGSLHQ. Glutamine 195 serves as a coordination point for D-glucose. A helical membrane pass occupies residues 196 to 216; that stretch reads LLVTIAILVSQIFGLPHLLGT. Residues 217–219 are Extracellular-facing; sequence GDR. The helical transmembrane segment at 220 to 240 threads the bilayer; that stretch reads WPLIFAFTVVPAVLQLALLML. Residues 241-299 lie on the Cytoplasmic side of the membrane; that stretch reads CPESPKYTMAVRGQRNEAESALKKLRDTEDVSTEIEAMQEEATAAGVQEKPKMGDMFKG. A helical transmembrane segment spans residues 300–320; the sequence is ALLWPMSIAIMMMLAQQLSGI. Residues 315-316, asparagine 321, and asparagine 352 each bind D-glucose; that span reads QQ. At 321–341 the chain is on the extracellular side; that stretch reads NVAMFYSTVIFRGAGLTGNEP. The chain crosses the membrane as a helical span at residues 342–362; sequence FYATIGMGAVNVIMTLISVWL. Topologically, residues 363–373 are cytoplasmic; that stretch reads VDHPKFGRRSL. A helical transmembrane segment spans residues 374–394; the sequence is LLAGLTGMFVSTLLLVGALTI. Residues 395 to 409 lie on the Extracellular side of the membrane; that stretch reads QNSGGDKWASYSAIG. The chain crosses the membrane as a helical span at residues 410–430; that stretch reads FVLLFVISFATGPGAIPWFFV. Residue tryptophan 427 coordinates D-glucose. Topologically, residues 431–445 are cytoplasmic; it reads SEIFDSSARGNANSI. The helical transmembrane segment at 446–464 threads the bilayer; the sequence is AVMVNWAANLLVGLTFLPI. The Extracellular segment spans residues 465 to 470; the sequence is NNLMQQ. A helical transmembrane segment spans residues 471-491; it reads YSFFIFSGFLAFFIFYTWKFV. Topologically, residues 492–510 are cytoplasmic; sequence PETKGKSIEQIQAEFEKRK.

This sequence belongs to the major facilitator superfamily. Sugar transporter (TC 2.A.1.1) family. Glucose transporter subfamily. Isoform a is expressed in pharyngeal muscle and intestinal cells in both embryos and adults (at protein level).

It is found in the cell membrane. Its subcellular location is the basolateral cell membrane. Functionally, facilitative glucose transporter that plays a role in glucose metabolism and regulation of longevity. May also play a role in lipid metabolism. Glucose transport activity of isoform a is competitively inhibited by mannose, galactose and fructose, suggesting ability to transport also other hexose sugars. The chain is Facilitated glucose transporter protein 1 from Caenorhabditis elegans.